A 62-amino-acid polypeptide reads, in one-letter code: Protein translocase subunit SecE (62 aa).

A helical membrane pass occupies residues 40 to 60 (LLVLAVVGVLAYIIQLALTLI).

The protein belongs to the SecE/SEC61-gamma family. As to quaternary structure, component of the Sec protein translocase complex. Heterotrimer consisting of SecY (alpha), SecG (beta) and SecE (gamma) subunits. The heterotrimers can form oligomers, although 1 heterotrimer is thought to be able to translocate proteins. Interacts with the ribosome. May interact with SecDF, and other proteins may be involved.

Its subcellular location is the cell membrane. Functionally, essential subunit of the Sec protein translocation channel SecYEG. Clamps together the 2 halves of SecY. May contact the channel plug during translocation. The protein is Protein translocase subunit SecE of Saccharolobus solfataricus (strain ATCC 35092 / DSM 1617 / JCM 11322 / P2) (Sulfolobus solfataricus).